The following is a 747-amino-acid chain: MSERQIHSVSMELAGRTLTLEAGRFAEQANGAVVVRYGDTMLLATAVASKEPRADADFFPLTVDYEEKMYAAGKIPGSFFKREGKPTDSAILTARLTDRPLRPLFPEGYRNEVQIIVTTFSIDMVNDPAPLAIIGASAALAISDIPFLGPVGAVQVGYIDGKVQINPEMPDMPNSDLDLVVAGTKDAVLMVEAGAKELPEDLMLEAIIQGHQVCKQICDLQNELVRLAGRPKREFVPPPVDTSLEEAIQQWLGNRLYEAITDPNKMVRDAQTEALKQEVIAHFTADEPEEELEARIAAVSTAFENLLYEEVRRMILERGERVDGRGPKDIRPISIEVGLIPRVHGSGLFTRGQTQVLTLATLGSPAEEQRLDDLGIETTKRYIHHYNFPPFSTGEVRRLGSPRRRDIGHGALAERSLLAVLPSKEEFPYTMRLVSETLSSNGSSSMASVCGSSLALMDAGVPIKAPVAGVAMGLITGKDGRWRVLTDIQGIEDHLGDMDFKVAGTAKGVTGLQLDIKTTGITYEIMREAFAQAREGRLYILDKMNAVISEPRKELSPYAPRIITLQINPEKIGALIGPGGKTVRGITEATGAQIDIEEDGRVYISTPDAAAAQQAVAMVEALTREIKVGDIFLGKVVRIMPFGAFVNLAPGKDGMVHVSELDVGRVENVEDVIKMGDEINVMVIGIEPGTGKVSLSRRALLTGETAEDRRAAGAGRGLRDGGGRSGGSDRGGDRGPRGDDRQRPRRR.

Mg(2+) is bound by residues D493 and D499. The KH domain maps to P560–V619. The S1 motif domain maps to G629–R698. Residues T705–R747 form a disordered region. 2 stretches are compositionally biased toward basic and acidic residues: residues A706–G722 and R730–R747.

This sequence belongs to the polyribonucleotide nucleotidyltransferase family. Mg(2+) is required as a cofactor.

The protein localises to the cytoplasm. The catalysed reaction is RNA(n+1) + phosphate = RNA(n) + a ribonucleoside 5'-diphosphate. Its function is as follows. Involved in mRNA degradation. Catalyzes the phosphorolysis of single-stranded polyribonucleotides processively in the 3'- to 5'-direction. This is Polyribonucleotide nucleotidyltransferase from Roseiflexus sp. (strain RS-1).